Consider the following 160-residue polypeptide: Cytochrome b6-f complex subunit 4 (160 aa).

Helical transmembrane passes span 36-56, 95-115, and 131-151; these read LLYIFPVVILGTIACTVGLAV, LLGVLLMAAVPAGLLTVPFLE, and TVFLIGTVVSIWLGIGAALPI.

This sequence belongs to the cytochrome b family. PetD subfamily. As to quaternary structure, the 4 large subunits of the cytochrome b6-f complex are cytochrome b6, subunit IV (17 kDa polypeptide, petD), cytochrome f and the Rieske protein, while the 4 small subunits are petG, petL, petM and petN. The complex functions as a dimer.

It localises to the plastid. Its subcellular location is the chloroplast thylakoid membrane. In terms of biological role, component of the cytochrome b6-f complex, which mediates electron transfer between photosystem II (PSII) and photosystem I (PSI), cyclic electron flow around PSI, and state transitions. This is Cytochrome b6-f complex subunit 4 from Physcomitrium patens (Spreading-leaved earth moss).